A 202-amino-acid polypeptide reads, in one-letter code: Thymidylate kinase (202 aa).

7–14 contributes to the ATP binding site; it reads GIDGSGKT.

The protein belongs to the thymidylate kinase family.

The catalysed reaction is dTMP + ATP = dTDP + ADP. Phosphorylation of dTMP to form dTDP in both de novo and salvage pathways of dTTP synthesis. This Ehrlichia chaffeensis (strain ATCC CRL-10679 / Arkansas) protein is Thymidylate kinase.